The primary structure comprises 123 residues: Ribosome-binding factor A (123 aa).

The protein belongs to the RbfA family. Monomer. Binds 30S ribosomal subunits, but not 50S ribosomal subunits or 70S ribosomes.

Its subcellular location is the cytoplasm. Its function is as follows. One of several proteins that assist in the late maturation steps of the functional core of the 30S ribosomal subunit. Associates with free 30S ribosomal subunits (but not with 30S subunits that are part of 70S ribosomes or polysomes). Required for efficient processing of 16S rRNA. May interact with the 5'-terminal helix region of 16S rRNA. The chain is Ribosome-binding factor A from Legionella pneumophila (strain Lens).